Reading from the N-terminus, the 727-residue chain is Pollen-specific leucine-rich repeat extensin-like protein 3 (727 aa).

The N-terminal stretch at 1–22 is a signal peptide; the sequence is MPHIYKQPLGIFQGFVPTLTDA. An LRR 1 repeat occupies 19 to 43; the sequence is LTDAEVSFIAQRQLLTLPENGELPD. The N-linked (GlcNAc...) asparagine glycan is linked to Asn80. LRR repeat units follow at residues 107–131, 132–154, 156–179, 180–202, 203–226, 228–249, 250–273, 275–296, and 297–321; these read VAVVAGVDLNGADIAGHLPAELGLM, TDVAMFHLNSNRFCGIIPKSFEK, SLMHEFDVSNNRFVGPFPSVVLSW, PAVKFIDVRYNDFEGQVPPELFK, KDLDAIFLNNNRFTSTIPDSLGES, ASVVTFAHNKFSGCIPRSIGNM, KNLNEIIFKDNSLGGCFPSEIGKL, NVNVFDASMNSFTGVLPPSFVG, and LTSMEEFDISGNKLTGFIPENICKL. Asn326 carries an N-linked (GlcNAc...) asparagine glycan. The disordered stretch occupies residues 381-727; sequence SKDKCAGGSS…SPPPPMFQGY (347 aa). Composition is skewed to pro residues over residues 397 to 419, 446 to 457, 466 to 479, 492 to 677, and 718 to 727; these read SPSPVPTRPVHKPQPPKESPQPN, SPPPASSPPTSP, VHKPQPPKESPQPN, SPPP…PKMS, and SPPPPMFQGY. The tract at residues 432–727 is contains the Ser-Pro(4) repeats; that stretch reads SPPPPQQPHH…SPPPPMFQGY (296 aa).

Post-translationally, hydroxylated on proline residues in the S-P-P-P-P repeat. O-glycosylated on hydroxyprolines. Expressed in flowers, stamen, pollen, and pollinated carpels.

Its subcellular location is the secreted. The protein resides in the cell wall. In terms of biological role, modulates cell morphogenesis by regulating cell wall formation and assembly, and/or growth polarization. This chain is Pollen-specific leucine-rich repeat extensin-like protein 3 (PEX3), found in Arabidopsis thaliana (Mouse-ear cress).